The following is a 234-amino-acid chain: Glucosamine-6-phosphate deaminase (234 aa).

Aspartate 62 (proton acceptor; for enolization step) is an active-site residue. The For ring-opening step role is filled by asparagine 128. Histidine 130 (proton acceptor; for ring-opening step) is an active-site residue. Catalysis depends on glutamate 135, which acts as the For ring-opening step.

It belongs to the glucosamine/galactosamine-6-phosphate isomerase family. NagB subfamily.

The enzyme catalyses alpha-D-glucosamine 6-phosphate + H2O = beta-D-fructose 6-phosphate + NH4(+). The protein operates within amino-sugar metabolism; N-acetylneuraminate degradation; D-fructose 6-phosphate from N-acetylneuraminate: step 5/5. Catalyzes the reversible isomerization-deamination of glucosamine 6-phosphate (GlcN6P) to form fructose 6-phosphate (Fru6P) and ammonium ion. This chain is Glucosamine-6-phosphate deaminase, found in Streptococcus pyogenes serotype M18 (strain MGAS8232).